The chain runs to 794 residues: Signal transducer and activator of transcription 5A (794 aa).

Tyr-90 is modified (phosphotyrosine). Ser-129 carries the phosphoserine modification. One can recognise an SH2 domain in the interval 589 to 686; sequence WNDGAILGFV…EVFSKYYTPV (98 aa). Tyr-682 is modified (phosphotyrosine). Tyr-694 bears the Phosphotyrosine; by JAK2 mark. The segment at 765 to 794 is disordered; that stretch reads EELLRRPNGQSGPLSPPPAGLFTPARGSLS.

The protein belongs to the transcription factor STAT family. As to quaternary structure, forms a homodimer or a heterodimer with a related family member. Binds NR3C1. Interacts with NCOA1 and SOCS7. Interacts with ERBB4. Interacts with EBF4. Interacts with CD69. In terms of processing, ISGylated. Tyrosine phosphorylated in response to KITLG/SCF, IL2, IL3, IL7, IL15, CSF2/GMCSF, GH1, PRL, EPO and THPO. Activated KIT promotes phosphorylation on tyrosine residues and subsequent translocation to the nucleus. Tyrosine phosphorylated in response to constitutively activated FGFR1, FGFR2, FGFR3 and FGFR4. Tyrosine phosphorylation is required for DNA-binding activity and dimerization. Serine phosphorylation is also required for maximal transcriptional activity. Tyrosine phosphorylated in response to signaling via activated FLT3; wild-type FLT3 results in much weaker phosphorylation than constitutively activated mutant FLT3. Alternatively, can be phosphorylated by JAK2 at Tyr-694. As to expression, found in mammary gland and, in lesser extent, in ovary, thymus, spleen, kidney, lung, muscle and adrenal gland.

The protein resides in the cytoplasm. It is found in the nucleus. Functionally, carries out a dual function: signal transduction and activation of transcription. Mediates cellular responses to the cytokine KITLG/SCF and other growth factors. May mediate cellular responses to activated FGFR1, FGFR2, FGFR3 and FGFR4. Binds to the GAS element and activates PRL-induced transcription. Regulates the expression of milk proteins during lactation. This chain is Signal transducer and activator of transcription 5A (STAT5A), found in Ovis aries (Sheep).